Here is a 225-residue protein sequence, read N- to C-terminus: Small ribosomal subunit protein uS3 (225 aa).

The 69-residue stretch at 38-106 (IRKFVQNRFN…PVNLNIIEVK (69 aa)) folds into the KH type-2 domain.

The protein belongs to the universal ribosomal protein uS3 family. In terms of assembly, part of the 30S ribosomal subunit. Forms a tight complex with proteins S10 and S14.

Functionally, binds the lower part of the 30S subunit head. Binds mRNA in the 70S ribosome, positioning it for translation. This Leptospira interrogans serogroup Icterohaemorrhagiae serovar copenhageni (strain Fiocruz L1-130) protein is Small ribosomal subunit protein uS3.